Here is a 53-residue protein sequence, read N- to C-terminus: Beta-defensin C7 (53 aa).

Cystine bridges form between cysteine 20–cysteine 49, cysteine 27–cysteine 42, and cysteine 32–cysteine 50.

The protein belongs to the beta-defensin family.

Its subcellular location is the secreted. Functionally, has bactericidal activity. The sequence is that of Beta-defensin C7 from Bos taurus (Bovine).